A 177-amino-acid polypeptide reads, in one-letter code: Large ribosomal subunit protein uL6 (177 aa).

It belongs to the universal ribosomal protein uL6 family. As to quaternary structure, part of the 50S ribosomal subunit.

In terms of biological role, this protein binds to the 23S rRNA, and is important in its secondary structure. It is located near the subunit interface in the base of the L7/L12 stalk, and near the tRNA binding site of the peptidyltransferase center. This is Large ribosomal subunit protein uL6 from Neisseria meningitidis serogroup C (strain 053442).